The primary structure comprises 132 residues: Small ribosomal subunit protein bS6 (132 aa).

A disordered region spans residues 96–132 (HAEGPSIQMQKRDERERGDRGDRPDRGDRGERGGFRR). Basic and acidic residues predominate over residues 105–132 (QKRDERERGDRGDRPDRGDRGERGGFRR).

It belongs to the bacterial ribosomal protein bS6 family.

Functionally, binds together with bS18 to 16S ribosomal RNA. The chain is Small ribosomal subunit protein bS6 from Cereibacter sphaeroides (strain ATCC 17025 / ATH 2.4.3) (Rhodobacter sphaeroides).